A 145-amino-acid chain; its full sequence is Thioredoxin C-3 (145 aa).

C25, C28, and H29 together coordinate heme. The Thioredoxin domain maps to 29-140 (HQALLPLEPI…LQQWLDQQLQ (112 aa)). The cysteines at positions 65 and 68 are disulfide-linked.

It belongs to the thioredoxin family.

In terms of biological role, participates in various redox reactions through the reversible oxidation of its active center dithiol to a disulfide and catalyzes dithiol-disulfide exchange reactions. This chain is Thioredoxin C-3, found in Corynebacterium nephridii.